The following is a 498-amino-acid chain: Calcium-binding tyrosine phosphorylation-regulated protein (498 aa).

Residues 12-49 form the RIIa domain; it reads YGLKTLLEGVSRAILKINPPNITQFAAVYFKELIVFRE. 3 disordered regions span residues 74 to 107, 135 to 164, and 247 to 279; these read GTTQEKEPECMEEQVETSVVSQEPTRMEKSTDTE, EETPEAACGGSPKPSTPKAVTPPSSPSPAA, and VDLGPKPKDDEAEPTTASSFPLQDEQDPPAYDQ. The span at 145–164 shows a compositional bias: low complexity; the sequence is SPKPSTPKAVTPPSSPSPAA.

Interacts with FSCB. In terms of processing, phosphorylated on tyrosine residues during in vitro capacitation. Dephosphorylation affects its ability to bind calcium. In terms of tissue distribution, expressed in testis.

The protein resides in the cytoplasm. The protein localises to the cytoskeleton. It localises to the cell projection. It is found in the cilium. Its subcellular location is the flagellum. Its function is as follows. May function as a regulator of both motility- and head-associated functions such as capacitation and the acrosome reaction. Binds calcium in vitro. This chain is Calcium-binding tyrosine phosphorylation-regulated protein (CABYR), found in Vulpes vulpes (Red fox).